The chain runs to 365 residues: 4-hydroxy-tetrahydrodipicolinate synthase 1, chloroplastic (365 aa).

The N-terminal 39 residues, 1–39 (MSALKNYGLISIDSALHFPRSNQLQSYKRRNAKWVSPIA), are a transit peptide targeting the chloroplast. Thr-108 provides a ligand contact to pyruvate. Catalysis depends on Tyr-194, which acts as the Proton donor/acceptor. Residue Lys-222 is the Schiff-base intermediate with substrate of the active site. Ile-261 is a binding site for pyruvate.

This sequence belongs to the DapA family.

The protein resides in the plastid. It localises to the chloroplast. The catalysed reaction is L-aspartate 4-semialdehyde + pyruvate = (2S,4S)-4-hydroxy-2,3,4,5-tetrahydrodipicolinate + H2O + H(+). The protein operates within amino-acid biosynthesis; L-lysine biosynthesis via DAP pathway; (S)-tetrahydrodipicolinate from L-aspartate: step 3/4. Its function is as follows. Catalyzes the condensation of (S)-aspartate-beta-semialdehyde [(S)-ASA] and pyruvate to 4-hydroxy-tetrahydrodipicolinate (HTPA). In Arabidopsis thaliana (Mouse-ear cress), this protein is 4-hydroxy-tetrahydrodipicolinate synthase 1, chloroplastic (DHDPS1).